A 143-amino-acid polypeptide reads, in one-letter code: FAD synthase (143 aa).

Residues 11–12, 16–19, and Asp-94 each bind ATP; these read TF and HPGH.

It belongs to the archaeal FAD synthase family. As to quaternary structure, homodimer. It depends on a divalent metal cation as a cofactor.

It carries out the reaction FMN + ATP + H(+) = FAD + diphosphate. It functions in the pathway cofactor biosynthesis; FAD biosynthesis; FAD from FMN: step 1/1. In terms of biological role, catalyzes the transfer of the AMP portion of ATP to flavin mononucleotide (FMN) to produce flavin adenine dinucleotide (FAD) coenzyme. This chain is FAD synthase, found in Halomicrobium mukohataei (strain ATCC 700874 / DSM 12286 / JCM 9738 / NCIMB 13541) (Haloarcula mukohataei).